Consider the following 74-residue polypeptide: uncharacterized protein (74 aa).

Residues 7–26 form a helical membrane-spanning segment; that stretch reads IHLYVMASAMSSSPIFFFFQ.

It is found in the membrane. This is an uncharacterized protein from Homo sapiens (Human).